A 145-amino-acid chain; its full sequence is Ribosome maturation factor RimP (145 aa).

Belongs to the RimP family.

The protein resides in the cytoplasm. Its function is as follows. Required for maturation of 30S ribosomal subunits. The protein is Ribosome maturation factor RimP of Borreliella burgdorferi (strain ZS7) (Borrelia burgdorferi).